Consider the following 85-residue polypeptide: uncharacterized protein (85 aa).

This is an uncharacterized protein from Treponema pallidum (strain Nichols).